Consider the following 287-residue polypeptide: ATP synthase gamma chain (287 aa).

The protein belongs to the ATPase gamma chain family. As to quaternary structure, F-type ATPases have 2 components, CF(1) - the catalytic core - and CF(0) - the membrane proton channel. CF(1) has five subunits: alpha(3), beta(3), gamma(1), delta(1), epsilon(1). CF(0) has three main subunits: a, b and c.

The protein localises to the cell inner membrane. Its function is as follows. Produces ATP from ADP in the presence of a proton gradient across the membrane. The gamma chain is believed to be important in regulating ATPase activity and the flow of protons through the CF(0) complex. In Geotalea uraniireducens (strain Rf4) (Geobacter uraniireducens), this protein is ATP synthase gamma chain.